We begin with the raw amino-acid sequence, 341 residues long: Tetraacyldisaccharide 4'-kinase (341 aa).

ATP is bound at residue 54 to 61 (TVGGAGKT).

This sequence belongs to the LpxK family.

The enzyme catalyses a lipid A disaccharide + ATP = a lipid IVA + ADP + H(+). It functions in the pathway glycolipid biosynthesis; lipid IV(A) biosynthesis; lipid IV(A) from (3R)-3-hydroxytetradecanoyl-[acyl-carrier-protein] and UDP-N-acetyl-alpha-D-glucosamine: step 6/6. Its function is as follows. Transfers the gamma-phosphate of ATP to the 4'-position of a tetraacyldisaccharide 1-phosphate intermediate (termed DS-1-P) to form tetraacyldisaccharide 1,4'-bis-phosphate (lipid IVA). The chain is Tetraacyldisaccharide 4'-kinase from Brucella melitensis biotype 2 (strain ATCC 23457).